A 173-amino-acid polypeptide reads, in one-letter code: MDITIQHPWFKRALGSLYPSRLFDQFFGEGLFEYDLLPFLSSTISPYYRQSLFRTVLESGISEVRSDRDRFVIYLDVKHFSPEDLTVKVLDDYVEIHGKHSERQDDHGYISREFHRRYRLPSNVDQSAISCSLSADGMLTFSGPKIHSNMESSHSDRSIPVSREEKPTLAPSS.

The residue at position 1 (Met-1) is an N-acetylmethionine. The segment at Met-1 to Glu-63 is required for complex formation with BFSP1 and BFSP2. Residue Gln-6 is modified to Deamidated glutamine; partial. Phosphoserine is present on Ser-45. Position 50 is a deamidated glutamine; partial (Gln-50). The region spanning Leu-52–Glu-164 is the sHSP domain. The residue at position 99 (Lys-99) is an N6-acetyllysine. Zn(2+) contacts are provided by His-100, Glu-102, and His-107. A Phosphoserine modification is found at Ser-122. Deamidated asparagine; partial is present on Asn-123. The segment at Pro-144–Ser-173 is disordered. The span at Ser-153–Pro-167 shows a compositional bias: basic and acidic residues. A Zn(2+)-binding site is contributed by His-154. An O-linked (GlcNAc) serine glycan is attached at Ser-162.

It belongs to the small heat shock protein (HSP20) family. Heteromer composed of three CRYAA and one CRYAB subunits. Inter-subunit bridging via zinc ions enhances stability, which is crucial as there is no protein turn over in the lens. Can also form homodimers and homotetramers (dimers of dimers) which serve as the building blocks of homooligomers. Within homooligomers, the zinc-binding motif is created from residues of 3 different molecules. His-100 and Glu-102 from one molecule are ligands of the zinc ion, and His-107 and His-154 residues from additional molecules complete the site with tetrahedral coordination geometry. Part of a complex required for lens intermediate filament formation composed of BFSP1, BFSP2 and CRYAA. In terms of processing, acetylation at Lys-99 may increase chaperone activity. Undergoes age-dependent proteolytical cleavage at the C-terminus.

It localises to the cytoplasm. The protein resides in the nucleus. In terms of biological role, contributes to the transparency and refractive index of the lens. Acts as a chaperone, preventing aggregation of various proteins under a wide range of stress conditions. Required for the correct formation of lens intermediate filaments as part of a complex composed of BFSP1, BFSP2 and CRYAA. In Didelphis virginiana (North American opossum), this protein is Alpha-crystallin A chain (CRYAA).